The primary structure comprises 193 residues: Pyridoxal 5'-phosphate synthase subunit PdxT (193 aa).

Residue 50 to 52 (GES) coordinates L-glutamine. Cys-82 functions as the Nucleophile in the catalytic mechanism. L-glutamine contacts are provided by residues Arg-109 and 136–137 (IR). Catalysis depends on charge relay system residues His-172 and Glu-174.

It belongs to the glutaminase PdxT/SNO family. In terms of assembly, in the presence of PdxS, forms a dodecamer of heterodimers. Only shows activity in the heterodimer.

It carries out the reaction aldehydo-D-ribose 5-phosphate + D-glyceraldehyde 3-phosphate + L-glutamine = pyridoxal 5'-phosphate + L-glutamate + phosphate + 3 H2O + H(+). It catalyses the reaction L-glutamine + H2O = L-glutamate + NH4(+). It participates in cofactor biosynthesis; pyridoxal 5'-phosphate biosynthesis. Its function is as follows. Catalyzes the hydrolysis of glutamine to glutamate and ammonia as part of the biosynthesis of pyridoxal 5'-phosphate. The resulting ammonia molecule is channeled to the active site of PdxS. In Streptococcus pneumoniae (strain JJA), this protein is Pyridoxal 5'-phosphate synthase subunit PdxT.